The chain runs to 588 residues: Adenine deaminase (588 aa).

Belongs to the metallo-dependent hydrolases superfamily. Adenine deaminase family. As to quaternary structure, homodimer. Mn(2+) is required as a cofactor.

It carries out the reaction adenine + H2O + H(+) = hypoxanthine + NH4(+). The polypeptide is Adenine deaminase (Shigella flexneri).